We begin with the raw amino-acid sequence, 222 residues long: N-(5'-phosphoribosyl)anthranilate isomerase (222 aa).

This sequence belongs to the TrpF family.

The enzyme catalyses N-(5-phospho-beta-D-ribosyl)anthranilate = 1-(2-carboxyphenylamino)-1-deoxy-D-ribulose 5-phosphate. The protein operates within amino-acid biosynthesis; L-tryptophan biosynthesis; L-tryptophan from chorismate: step 3/5. In Gloeobacter violaceus (strain ATCC 29082 / PCC 7421), this protein is N-(5'-phosphoribosyl)anthranilate isomerase.